Reading from the N-terminus, the 311-residue chain is Olfactory receptor 10G7 (311 aa).

Topologically, residues 1–23 are extracellular; sequence MSNATLLTAFILTGLPHAPGLDA. Asn3 carries an N-linked (GlcNAc...) asparagine glycan. The chain crosses the membrane as a helical span at residues 24–44; sequence PLFGIFLVVYVLTVLGNLLIL. Residues 45–52 are Cytoplasmic-facing; the sequence is LVIRVDSH. The chain crosses the membrane as a helical span at residues 53-73; that stretch reads LHTPMYYFLTNLSFIDMWFST. Over 74–98 the chain is Extracellular; sequence VTVPKMLMTLVSPSGRTISFHSCVA. Cysteines 96 and 188 form a disulfide. A helical transmembrane segment spans residues 99-119; that stretch reads QLYFFHFLGSTECFLYTVMSY. At 120-138 the chain is on the cytoplasmic side; it reads DRYLAISYPLRYTNMMTGR. The helical transmembrane segment at 139-159 threads the bilayer; it reads SCALLATGTWLSGSLHSAVQT. The Extracellular portion of the chain corresponds to 160–196; sequence ILTFHLPYCGPNQIQHYFCDAPPILKLACADTSANEM. The helical transmembrane segment at 197–216 threads the bilayer; the sequence is VIFVNIGLVASGCFVLIVLS. Residues 217 to 236 lie on the Cytoplasmic side of the membrane; that stretch reads YVSIVCSILRIRTSEGRHRA. The chain crosses the membrane as a helical span at residues 237–257; sequence FQTCASHCIVVLCFFGPGLFI. The Extracellular segment spans residues 258–268; the sequence is YLRPGSRDALH. The helical transmembrane segment at 269–289 threads the bilayer; it reads GVVAVFYTTLTPLFNPVVYTL. The Cytoplasmic segment spans residues 290–311; it reads RNKEVKKALLKLKNGSVFAQGE.

Belongs to the G-protein coupled receptor 1 family.

It is found in the cell membrane. In terms of biological role, odorant receptor. The protein is Olfactory receptor 10G7 (OR10G7) of Homo sapiens (Human).